We begin with the raw amino-acid sequence, 541 residues long: Chaperonin GroEL 1 (541 aa).

ATP is bound by residues 30–33 (TLGP), 87–91 (DGTTT), Gly-414, 478–480 (NAA), and Asp-494.

It belongs to the chaperonin (HSP60) family. Forms a cylinder of 14 subunits composed of two heptameric rings stacked back-to-back. Interacts with the co-chaperonin GroES.

The protein resides in the cytoplasm. It carries out the reaction ATP + H2O + a folded polypeptide = ADP + phosphate + an unfolded polypeptide.. In terms of biological role, together with its co-chaperonin GroES, plays an essential role in assisting protein folding. The GroEL-GroES system forms a nano-cage that allows encapsulation of the non-native substrate proteins and provides a physical environment optimized to promote and accelerate protein folding. The polypeptide is Chaperonin GroEL 1 (Thermobifida fusca (strain YX)).